A 650-amino-acid polypeptide reads, in one-letter code: MIKITFPDGAVREYQAGVTTFEIAESISKSLAKKALAGKFNGKLIDTTRAIDEDGTLEIVMPDHDDALDILRHSAAHLFAQAARRLFPDIKLGVGPAIQDGFYYDTDNAAGQISNEDLPRIQEEMMKIVKENFPSERREVTKEEALEIFKNDPYKLELIHEHSDDEGGLTIYTQGEYVDLCRGPHVPSTGRIQIFELLNVAGAYWRGKSENPMMQRVYGTAWFDKKDLKAYLQMREEAKERDHRKLGKELDLFMISQEVGQGLPFWLPNGATIRRTLERYITDKELASGYQHVYTPPLASVELYKTSGHWEHYSEDMFPTMDMGDGEEFVLRPMNCPHHIQVYKNHVRSYRELPVRIAELGMMHRYEKSGALTGLQRVREMTLNDGHIFVTPEQIQEEFKKALQLIIDVYADFNLNDYRFRLSYRDPEDKEKYYDNDEMWENAQRMLKGAMDEMGVDYFEAEGEAAFYGPKLDIQVKTALGNEETLSTIQLDFLLPERFGLTYIGADGEEHRPVMIHRGVISTMERFTAILIETYKGAFPTWLAPTQVTMIPISVEAHLDYAWKVAKELQDRGVRVHVDERNEKMQYKIRQSQTSKIPYQLIVGDKEMEDNAVNVRRYGSKATQTQSVSEFVDHILADIARKSRPAEAAE.

One can recognise a TGS domain in the interval 1–61 (MIKITFPDGA…DEDGTLEIVM (61 aa)). The segment at 242-540 (DHRKLGKELD…LIETYKGAFP (299 aa)) is catalytic. Positions 336, 387, and 517 each coordinate Zn(2+).

It belongs to the class-II aminoacyl-tRNA synthetase family. In terms of assembly, homodimer. It depends on Zn(2+) as a cofactor.

It localises to the cytoplasm. The catalysed reaction is tRNA(Thr) + L-threonine + ATP = L-threonyl-tRNA(Thr) + AMP + diphosphate + H(+). Catalyzes the attachment of threonine to tRNA(Thr) in a two-step reaction: L-threonine is first activated by ATP to form Thr-AMP and then transferred to the acceptor end of tRNA(Thr). Also edits incorrectly charged L-seryl-tRNA(Thr). In Streptococcus suis (strain 98HAH33), this protein is Threonine--tRNA ligase.